The chain runs to 1756 residues: Transposon Ty1-PR2 Gag-Pol polyprotein (1756 aa).

Polar residues-rich tracts occupy residues 1 to 10 (MESQQLSNYP), 48 to 60 (TKAN…TPAS), and 127 to 152 (QSQF…GNTF). 3 disordered regions span residues 1–93 (MESQ…MMTQ), 126–173 (PQSQ…RPPP), and 352–421 (GSRN…SKST). Positions 153-165 (TDSSSADSDMTST) are enriched in low complexity. The interval 299–401 (NNGIHINNKV…NSKSKTARAH (103 aa)) is RNA-binding. Residues 402–418 (NVSTSNNSPSTDNDSIS) are compositionally biased toward low complexity. Asp-461 (for protease activity; shared with dimeric partner) is an active-site residue. The segment at 583 to 640 (NVHTSESTRKYPYPFIHRMLAHANAQTIRYSLKNNTITYFNESDVDWSSAIDYQCPDC) is integrase-type zinc finger-like. In terms of domain architecture, Integrase catalytic spans 660–836 (NSYEPFQYLH…AGLDISTLLP (177 aa)). Residues Asp-671 and Asp-736 each contribute to the Mg(2+) site. 3 disordered regions span residues 957–1088 (SKAV…ETEK), 1093–1112 (RSPS…NIVP), and 1131–1188 (DLPL…DNET). Over residues 961–970 (SPTDSTPPST) the composition is skewed to low complexity. Over residues 1006 to 1016 (STPQISNIEST) the composition is skewed to polar residues. A compositionally biased stretch (basic and acidic residues) spans 1039-1054 (ESSHASKSKDFRHSDS). Polar residues-rich tracts occupy residues 1055 to 1083 (YSEN…QISD) and 1102 to 1112 (PENNSSHNIVP). The Bipartite nuclear localization signal motif lies at 1179–1213 (KKRSLEDNETEIKVSRDTWNTKNMRSLEPPRSKKR). The 139-residue stretch at 1339–1477 (NNYYITQLDI…DILGLEIKYQ (139 aa)) folds into the Reverse transcriptase Ty1/copia-type domain. 6 residues coordinate Mg(2+): Asp-1347, Asp-1428, Asp-1429, Asp-1611, Glu-1653, and Asp-1686. The region spanning 1611–1753 (DASYGNQPYY…IKTFKLLTNK (143 aa)) is the RNase H Ty1/copia-type domain.

In terms of assembly, the capsid protein forms a homotrimer, from which the VLPs are assembled. The protease is a homodimer, whose active site consists of two apposed aspartic acid residues. In terms of processing, initially, virus-like particles (VLPs) are composed of the structural unprocessed proteins Gag and Gag-Pol, and also contain the host initiator methionine tRNA (tRNA(i)-Met) which serves as a primer for minus-strand DNA synthesis, and a dimer of genomic Ty RNA. Processing of the polyproteins occurs within the particle and proceeds by an ordered pathway, called maturation. First, the protease (PR) is released by autocatalytic cleavage of the Gag-Pol polyprotein yielding capsid protein p45 and a Pol-p154 precursor protein. This cleavage is a prerequisite for subsequent processing of Pol-p154 at the remaining sites to release the mature structural and catalytic proteins. Maturation takes place prior to the RT reaction and is required to produce transposition-competent VLPs.

It localises to the cytoplasm. The protein resides in the nucleus. It carries out the reaction DNA(n) + a 2'-deoxyribonucleoside 5'-triphosphate = DNA(n+1) + diphosphate. The enzyme catalyses Endonucleolytic cleavage to 5'-phosphomonoester.. Functionally, capsid protein (CA) is the structural component of the virus-like particle (VLP), forming the shell that encapsulates the retrotransposons dimeric RNA genome. The particles are assembled from trimer-clustered units and there are holes in the capsid shells that allow for the diffusion of macromolecules. CA also has nucleocapsid-like chaperone activity, promoting primer tRNA(i)-Met annealing to the multipartite primer-binding site (PBS), dimerization of Ty1 RNA and initiation of reverse transcription. The aspartyl protease (PR) mediates the proteolytic cleavages of the Gag and Gag-Pol polyproteins after assembly of the VLP. Its function is as follows. Reverse transcriptase/ribonuclease H (RT) is a multifunctional enzyme that catalyzes the conversion of the retro-elements RNA genome into dsDNA within the VLP. The enzyme displays a DNA polymerase activity that can copy either DNA or RNA templates, and a ribonuclease H (RNase H) activity that cleaves the RNA strand of RNA-DNA heteroduplexes during plus-strand synthesis and hydrolyzes RNA primers. The conversion leads to a linear dsDNA copy of the retrotransposon that includes long terminal repeats (LTRs) at both ends. In terms of biological role, integrase (IN) targets the VLP to the nucleus, where a subparticle preintegration complex (PIC) containing at least integrase and the newly synthesized dsDNA copy of the retrotransposon must transit the nuclear membrane. Once in the nucleus, integrase performs the integration of the dsDNA into the host genome. The chain is Transposon Ty1-PR2 Gag-Pol polyprotein (TY1B-PR2) from Saccharomyces cerevisiae (strain ATCC 204508 / S288c) (Baker's yeast).